Here is a 352-residue protein sequence, read N- to C-terminus: Serine/threonine-protein phosphatase 2A activator 2 (352 aa).

The protein belongs to the PTPA-type PPIase family.

The protein resides in the cytoplasm. It catalyses the reaction [protein]-peptidylproline (omega=180) = [protein]-peptidylproline (omega=0). Functionally, PPIases accelerate the folding of proteins. It catalyzes the cis-trans isomerization of proline imidic peptide bonds in oligopeptides. Acts as a regulatory subunit for PP2A-like phosphatases modulating their activity or substrate specificity, probably by inducing a conformational change in the catalytic subunit, a direct target of the PPIase. Can reactivate inactive phosphatase PP2A-phosphatase methylesterase complexes (PP2Ai) in presence of ATP and Mg(2+) by dissociating the inactive form from the complex. This is Serine/threonine-protein phosphatase 2A activator 2 (rrd2) from Schizosaccharomyces pombe (strain 972 / ATCC 24843) (Fission yeast).